The primary structure comprises 394 residues: Elongation factor Tu (394 aa).

Positions 10–205 (KPHVNIGTIG…VDTWIPLPPR (196 aa)) constitute a tr-type G domain. Positions 19–26 (GHVDHGKT) are G1. 19–26 (GHVDHGKT) provides a ligand contact to GTP. Thr-26 is a binding site for Mg(2+). The segment at 60–64 (GITIN) is G2. A G3 region spans residues 81–84 (DCPG). GTP contacts are provided by residues 81 to 85 (DCPGH) and 136 to 139 (NKCD). The tract at residues 136-139 (NKCD) is G4. The segment at 174 to 176 (SAL) is G5.

Belongs to the TRAFAC class translation factor GTPase superfamily. Classic translation factor GTPase family. EF-Tu/EF-1A subfamily. As to quaternary structure, monomer.

It localises to the cytoplasm. The enzyme catalyses GTP + H2O = GDP + phosphate + H(+). In terms of biological role, GTP hydrolase that promotes the GTP-dependent binding of aminoacyl-tRNA to the A-site of ribosomes during protein biosynthesis. This Phocaeicola vulgatus (strain ATCC 8482 / DSM 1447 / JCM 5826 / CCUG 4940 / NBRC 14291 / NCTC 11154) (Bacteroides vulgatus) protein is Elongation factor Tu.